Here is a 470-residue protein sequence, read N- to C-terminus: Argininosuccinate lyase (470 aa).

Belongs to the lyase 1 family. Argininosuccinate lyase subfamily.

It is found in the cytoplasm. The enzyme catalyses 2-(N(omega)-L-arginino)succinate = fumarate + L-arginine. It participates in amino-acid biosynthesis; L-arginine biosynthesis; L-arginine from L-ornithine and carbamoyl phosphate: step 3/3. The protein is Argininosuccinate lyase of Mycobacterium sp. (strain JLS).